We begin with the raw amino-acid sequence, 180 residues long: dCTP deaminase, dUMP-forming (180 aa).

Residues 96 to 101, Asp113, 121 to 123, Gln142, Tyr156, and Gln163 contribute to the dCTP site; these read RSSLGR and TLE. The active-site Proton donor/acceptor is the Glu123.

This sequence belongs to the dCTP deaminase family. In terms of assembly, homotrimer.

It carries out the reaction dCTP + 2 H2O = dUMP + NH4(+) + diphosphate. It participates in pyrimidine metabolism; dUMP biosynthesis; dUMP from dCTP: step 1/1. In terms of biological role, bifunctional enzyme that catalyzes both the deamination of dCTP to dUTP and the hydrolysis of dUTP to dUMP without releasing the toxic dUTP intermediate. The polypeptide is dCTP deaminase, dUMP-forming (Aquifex aeolicus (strain VF5)).